The sequence spans 283 residues: Phosphatidylglycerol--prolipoprotein diacylglyceryl transferase (283 aa).

Transmembrane regions (helical) follow at residues 20–40 (IGGF…IIGL), 60–80 (LVIW…VAFE), 94–114 (IWQG…AILV), and 121–141 (LSFW…QAIG). Arginine 142 provides a ligand contact to a 1,2-diacyl-sn-glycero-3-phospho-(1'-sn-glycerol). 3 helical membrane passes run 183–203 (FLYE…LFFY), 214–234 (GTIT…IEGL), and 248–268 (QVVS…LYLL).

The protein belongs to the Lgt family.

The protein resides in the cell inner membrane. The catalysed reaction is L-cysteinyl-[prolipoprotein] + a 1,2-diacyl-sn-glycero-3-phospho-(1'-sn-glycerol) = an S-1,2-diacyl-sn-glyceryl-L-cysteinyl-[prolipoprotein] + sn-glycerol 1-phosphate + H(+). The protein operates within protein modification; lipoprotein biosynthesis (diacylglyceryl transfer). Catalyzes the transfer of the diacylglyceryl group from phosphatidylglycerol to the sulfhydryl group of the N-terminal cysteine of a prolipoprotein, the first step in the formation of mature lipoproteins. This Synechocystis sp. (strain ATCC 27184 / PCC 6803 / Kazusa) protein is Phosphatidylglycerol--prolipoprotein diacylglyceryl transferase.